Consider the following 335-residue polypeptide: Glucokinase (335 aa).

11-16 (ADIGGT) is a binding site for ATP.

It belongs to the bacterial glucokinase family.

The protein resides in the cytoplasm. The catalysed reaction is D-glucose + ATP = D-glucose 6-phosphate + ADP + H(+). In Xanthomonas campestris pv. campestris (strain B100), this protein is Glucokinase.